A 917-amino-acid chain; its full sequence is Outer kinetochore KNL1 complex subunit SPC105 (917 aa).

Residues 1-17 (MNVDERSRIGGREKDAG) are compositionally biased toward basic and acidic residues. The disordered stretch occupies residues 1–38 (MNVDERSRIGGREKDAGPGKGILKQNQSSQMTSSFLEN). A compositionally biased stretch (polar residues) spans 24–36 (KQNQSSQMTSSFL). Residue Ser77 is modified to Phosphoserine. Disordered stretches follow at residues 93–172 (QNNE…MEMT), 235–282 (TEYE…QPME), and 324–343 (HHIDESPSEKHAFSSNKRRK). The span at 106-126 (STNSPTKISSQEEPLVTSTQI) shows a compositional bias: polar residues. The span at 127 to 137 (DDARTEEKTAA) shows a compositional bias: basic and acidic residues. Residues 146–149 (MELT) carry the MELT motif. Thr149 bears the Phosphothreonine; by MPS1 mark. Positions 156–170 (PDSNKASQHDPTSME) are enriched in polar residues. The tract at residues 165 to 183 (DPTSMEMTEVFPRSIRQKN) is interacts with the BUB1-BUB3 complex. 2 short sequence motifs (MELT; degenerate) span residues 169–172 (MEMT) and 232–235 (IDLT). A phosphothreonine; by MPS1 mark is found at Thr172 and Thr235. Positions 245 to 257 (NSVSRSTGKSSDY) are enriched in polar residues. 2 stretches are compositionally biased toward basic and acidic residues: residues 258-273 (SVERSNDKSDLSKSEN) and 324-335 (HHIDESPSEKHA). Thr356 carries the phosphothreonine modification. Residue Ser380 is modified to Phosphoserine. Residues 397–427 (DVFTIEPGTEDTGMQTATDDEEDGENVDDNG) are disordered. Over residues 414–424 (TDDEEDGENVD) the composition is skewed to acidic residues. The interval 507 to 638 (PILEVEAFRC…IKEEIRSLKN (132 aa)) is required for interaction with KRE28. Residues 591–628 (ELILAENLNTLKREYEKLNEEVEKVNSIRGKIRKLNEA) are a coiled coil.

As to quaternary structure, component of the KNL1/SPC105 complex composed of SPC105 and KRE28. Part of the outer kinetochore KMN network that includes the KNL1, MIS12 and NDC80 complexes. Interacts (via phosphorylated MELT motifs) with BUB1 and BUB3 in the BUB1-BUB3 complex; the interaction is direct. Interacts with the MIS12 complex subunits MTW1 (via C-terminus) and NSL1 (via C-terminus). Interacts with the NDC80 complex subunits SPC24 and SPC25. Interacts with CNN1 (via N-terminus).

Its subcellular location is the nucleus. It localises to the chromosome. The protein resides in the centromere. The protein localises to the kinetochore. Functionally, acts as a component of the outer kinetochore KNL1 complex that serves as a docking point for spindle assembly checkpoint components and mediates microtubule-kinetochore interactions. Kinetochores, consisting of a centromere-associated inner segment and a microtubule-contacting outer segment, play a crucial role in chromosome segregation by mediating the physical connection between centromeric DNA and spindle microtubules. The outer kinetochore is made up of the ten-subunit KMN network, comprising the MIS12, NDC80 and KNL1 complexes, and auxiliary microtubule-associated components; together they connect the outer kinetochore with the inner kinetochore, bind microtubules, and mediate interactions with mitotic checkpoint proteins that delay anaphase until chromosomes are bioriented on the spindle. Recruits the BUB1-BUB3 complex to kinetochores when phosphorylated by MPS1, to support spindle assembly checkpoint signaling; the effect is reversed by protein phosphatase 1 (PP1). The KNL1 complex is required for kinetochore binding by the kMAPs (kinetochore-bound microtubule-associated proteins) BIM1, BIK1 and SLK19, and motors CIN8 and KAR3. The protein is Outer kinetochore KNL1 complex subunit SPC105 (SPC105) of Saccharomyces cerevisiae (strain ATCC 204508 / S288c) (Baker's yeast).